A 304-amino-acid chain; its full sequence is Cell surface-binding protein OPG105 (304 aa).

The Alpha-carbonic anhydrase domain maps to 1–235 (MPQQLSPINI…NDDTQVYYSG (235 aa)). Topologically, residues 1–275 (MPQQLSPINI…YQKYIEGNKT (275 aa)) are virion surface. The helical transmembrane segment at 276–294 (FAIIAIVFVFILTAILFLM) threads the bilayer. The Intravirion segment spans residues 295–304 (SQRYSREKQN).

Belongs to the alpha-carbonic anhydrase family. As to quaternary structure, homodimer; disulfide-linked. Post-translationally, apparently non-glycosylated.

The protein localises to the virion membrane. Its function is as follows. Binds to chondroitin sulfate on the cell surface to provide virion attachment to target cell. The chain is Cell surface-binding protein OPG105 (OPG105) from Monkeypox virus (strain Zaire-96-I-16) (MPX).